Reading from the N-terminus, the 674-residue chain is tRNA 5-methylaminomethyl-2-thiouridine biosynthesis bifunctional protein MnmC (674 aa).

Residues 1-246 are tRNA (mnm(5)s(2)U34)-methyltransferase; the sequence is MFIMSSISHA…KREMIAGSLS (246 aa). Residues 272–674 are FAD-dependent cmnm(5)s(2)U34 oxidoreductase; the sequence is IGGGIASATL…RKGKALTQKV (403 aa).

In the N-terminal section; belongs to the methyltransferase superfamily. tRNA (mnm(5)s(2)U34)-methyltransferase family. It in the C-terminal section; belongs to the DAO family. FAD serves as cofactor.

The protein localises to the cytoplasm. The catalysed reaction is 5-aminomethyl-2-thiouridine(34) in tRNA + S-adenosyl-L-methionine = 5-methylaminomethyl-2-thiouridine(34) in tRNA + S-adenosyl-L-homocysteine + H(+). Functionally, catalyzes the last two steps in the biosynthesis of 5-methylaminomethyl-2-thiouridine (mnm(5)s(2)U) at the wobble position (U34) in tRNA. Catalyzes the FAD-dependent demodification of cmnm(5)s(2)U34 to nm(5)s(2)U34, followed by the transfer of a methyl group from S-adenosyl-L-methionine to nm(5)s(2)U34, to form mnm(5)s(2)U34. The polypeptide is tRNA 5-methylaminomethyl-2-thiouridine biosynthesis bifunctional protein MnmC (Vibrio cholerae serotype O1 (strain ATCC 39315 / El Tor Inaba N16961)).